The primary structure comprises 318 residues: Gamma-glutamyl hydrolase (318 aa).

The signal sequence occupies residues 1–24; that stretch reads MASPGCLLCVLGLLLCGAASLELS. Residues 25-318 form the Gamma-glutamyl hydrolase domain; sequence RPHGDTAKKP…SSFQQCYIFD (294 aa). A glycan (N-linked (GlcNAc...) asparagine) is linked at Asn116. Cys134 serves as the catalytic Nucleophile. Asn163 and Asn203 each carry an N-linked (GlcNAc...) asparagine glycan. Catalysis depends on His244, which acts as the Proton donor. A glycan (N-linked (GlcNAc...) asparagine; partial) is linked at Asn307.

It belongs to the peptidase C26 family. In terms of assembly, homodimer.

The protein localises to the secreted. The protein resides in the extracellular space. Its subcellular location is the lysosome. It localises to the melanosome. It carries out the reaction (6S)-5,6,7,8-tetrahydrofolyl-(gamma-L-Glu)(n) + (n-1) H2O = (6S)-5,6,7,8-tetrahydrofolate + (n-1) L-glutamate. Functionally, hydrolyzes the polyglutamate sidechains of pteroylpolyglutamates. Progressively removes gamma-glutamyl residues from pteroylpoly-gamma-glutamate to yield pteroyl-alpha-glutamate (folic acid) and free glutamate. May play an important role in the bioavailability of dietary pteroylpolyglutamates and in the metabolism of pteroylpolyglutamates and antifolates. This chain is Gamma-glutamyl hydrolase, found in Homo sapiens (Human).